A 369-amino-acid chain; its full sequence is ATP-dependent (S)-NAD(P)H-hydrate dehydratase (369 aa).

In terms of domain architecture, YjeF C-terminal spans 14-356 (LFQKARKLVP…DEVHESFLTL (343 aa)). Residues G126 and 179–185 (NVNEFSR) each bind (6S)-NADPHX. Residues 231 to 235 (KGPHD) and 250 to 259 (GGLKRSGGQG) each bind ATP. D260 provides a ligand contact to (6S)-NADPHX. Residues 284 to 306 (GEQEHSKEAENKEEVQGELESNK) are compositionally biased toward basic and acidic residues. Residues 284–307 (GEQEHSKEAENKEEVQGELESNKR) form a disordered region.

Belongs to the NnrD/CARKD family. The cofactor is Mg(2+).

Its subcellular location is the cytoplasm. It catalyses the reaction (6S)-NADHX + ATP = ADP + phosphate + NADH + H(+). It carries out the reaction (6S)-NADPHX + ATP = ADP + phosphate + NADPH + H(+). In terms of biological role, catalyzes the dehydration of the S-form of NAD(P)HX at the expense of ATP, which is converted to ADP. Together with NAD(P)HX epimerase, which catalyzes the epimerization of the S- and R-forms, the enzyme allows the repair of both epimers of NAD(P)HX, a damaged form of NAD(P)H that is a result of enzymatic or heat-dependent hydration. The protein is ATP-dependent (S)-NAD(P)H-hydrate dehydratase of Emericella nidulans (strain FGSC A4 / ATCC 38163 / CBS 112.46 / NRRL 194 / M139) (Aspergillus nidulans).